Here is a 558-residue protein sequence, read N- to C-terminus: Glypican-1 (558 aa).

The N-terminal stretch at 1-23 (MELRARGWWLLCAAAALVACARG) is a signal peptide. 7 disulfide bridges follow: Cys32/Cys68, Cys62/Cys256, Cys69/Cys259, Cys191/Cys343, Cys246/Cys279, Cys268/Cys415, and Cys272/Cys401. N-linked (GlcNAc...) asparagine glycans are attached at residues Asn79 and Asn116. The tract at residues 341 to 374 (QGCGNPKVNPQGPGPEEKRRRGKLAPRERPPSGT) is disordered. The span at 355–370 (PEEKRRRGKLAPRERP) shows a compositional bias: basic and acidic residues. 3 O-linked (Xyl...) (heparan sulfate) serine glycosylation sites follow: Ser486, Ser488, and Ser490. The disordered stretch occupies residues 505 to 534 (RKSSSSRTPLTHALPGLSEQEGQKTSAASC). A lipid anchor (GPI-anchor amidated serine) is attached at Ser530. Positions 531–558 (AASCPQPPTFLLPLLLFLALTVARPRWR) are cleaved as a propeptide — removed in mature form.

The protein belongs to the glypican family. Post-translationally, S-nitrosylated in a Cu(2+)-dependent manner. Nitric acid (NO) is released from the nitrosylated cysteines by ascorbate or by some other reducing agent, in a Cu(2+) or Zn(2+) dependent manner. This free nitric oxide is then capable of cleaving the heparan sulfate side chains. In terms of processing, N- and O-glycosylated. N-glycosylation is mainly of the complex type containing sialic acid. O-glycosylated with heparan sulfate. The heparan sulfate chains can be cleaved either by the action of heparanase or, degraded by a deaminative process that uses nitric oxide (NO) released from the S-nitrosylated cysteines. This process is triggered by ascorbate, or by some other reducing agent, in a Cu(2+)- or Zn(2+) dependent manner. Cu(2+) ions are provided by ceruloproteins such as APP, PRNP or CP which associate with GCP1 in intracellular compartments or lipid rafts. This cell-associated glypican is further processed to give rise to a medium-released species.

It is found in the cell membrane. The protein localises to the endosome. The protein resides in the secreted. Its subcellular location is the extracellular space. Its function is as follows. Cell surface proteoglycan that bears heparan sulfate. Binds, via the heparan sulfate side chains, alpha-4 (V) collagen and participates in Schwann cell myelination. May act as a catalyst in increasing the rate of conversion of prion protein PRPN(C) to PRNP(Sc) via associating (via the heparan sulfate side chains) with both forms of PRPN, targeting them to lipid rafts and facilitating their interaction. Required for proper skeletal muscle differentiation by sequestering FGF2 in lipid rafts preventing its binding to receptors (FGFRs) and inhibiting the FGF-mediated signaling. The chain is Glypican-1 (GPC1) from Homo sapiens (Human).